A 606-amino-acid chain; its full sequence is Melanoma-associated antigen D2 (606 aa).

Positions 1–204 are disordered; the sequence is MSDTSESGAG…QASGTTGGRR (204 aa). Position 2 is an N-acetylserine (serine 2). Serine 5 is subject to Phosphoserine. Positions 24-37 are enriched in polar residues; it reads SSMMQTLLTVTQNV. Phosphothreonine is present on threonine 72. The span at 81-93 shows a compositional bias: polar residues; the sequence is TQASSTTQLTDTQ. Over residues 122–131 the composition is skewed to basic and acidic residues; that stretch reads ETKKVSHVAD. The segment covering 142 to 164 has biased composition (low complexity); the sequence is EAAPSQAPADEPEPESAAAQSQE. Residue serine 157 is modified to Phosphoserine. Residues 171-181 show a composition bias toward basic residues; that stretch reads KVKAKKARKVK. Phosphoserine occurs at positions 190, 191, 194, 197, 244, and 247. The segment covering 248 to 260 has biased composition (basic residues); it reads PKARRGKARRRAA. The segment at 248–275 is disordered; it reads PKARRGKARRRAAKLQSSQEPEAPPPRD. Residues serine 264 and serine 265 each carry the phosphoserine modification. Positions 279–478 constitute an MAGE domain; that stretch reads LQGRANDLVK…KEWAAQYREA (200 aa). The tract at residues 534–563 is disordered; the sequence is GAEAKAKAQESGSASTGASTSTNNSASASA.

Interacts with GNAS. May interact with DNAJB1. In terms of tissue distribution, widely expressed. In the developing and adult kidney, expressed in the thick ascending limb of the loop of Henle and the distal convoluted tubules outside the loop.

Regulates the expression, localization to the plasma membrane and function of the sodium chloride cotransporters SLC12A1 and SLC12A3, two key components of salt reabsorption in the distal renal tubule. The protein is Melanoma-associated antigen D2 (MAGED2) of Homo sapiens (Human).